The following is a 194-amino-acid chain: NADH-quinone oxidoreductase subunit B (194 aa).

Positions 73, 74, 138, and 168 each coordinate [4Fe-4S] cluster.

It belongs to the complex I 20 kDa subunit family. As to quaternary structure, NDH-1 is composed of 14 different subunits. Subunits NuoB, C, D, E, F, and G constitute the peripheral sector of the complex. The cofactor is [4Fe-4S] cluster.

The protein resides in the cell inner membrane. It catalyses the reaction a quinone + NADH + 5 H(+)(in) = a quinol + NAD(+) + 4 H(+)(out). In terms of biological role, NDH-1 shuttles electrons from NADH, via FMN and iron-sulfur (Fe-S) centers, to quinones in the respiratory chain. The immediate electron acceptor for the enzyme in this species is believed to be ubiquinone. Couples the redox reaction to proton translocation (for every two electrons transferred, four hydrogen ions are translocated across the cytoplasmic membrane), and thus conserves the redox energy in a proton gradient. The protein is NADH-quinone oxidoreductase subunit B of Rhizobium leguminosarum bv. trifolii (strain WSM2304).